The primary structure comprises 28 residues: Arylalkyl acylamidase (28 aa).

In terms of assembly, homotetramer.

The catalysed reaction is an N-acetylarylalkylamine + H2O = an aralkylamine + acetate. Activated by divalent metal ions. Inhibited by certain thiol reagents. Shows a strict specificity for N-acetyl arylalkylamines but not acetanilide derivatives. This chain is Arylalkyl acylamidase, found in Pseudomonas putida (Arthrobacter siderocapsulatus).